Here is a 548-residue protein sequence, read N- to C-terminus: Probable malate:quinone oxidoreductase (548 aa).

A disordered region spans residues 521–548; the sequence is DKPQAADSTPKPQLKPQPVQKEVADIAL. Over residues 530-541 the composition is skewed to low complexity; sequence PKPQLKPQPVQK.

This sequence belongs to the MQO family. It depends on FAD as a cofactor.

The enzyme catalyses (S)-malate + a quinone = a quinol + oxaloacetate. It participates in carbohydrate metabolism; tricarboxylic acid cycle; oxaloacetate from (S)-malate (quinone route): step 1/1. The polypeptide is Probable malate:quinone oxidoreductase (Shigella sonnei (strain Ss046)).